Here is a 207-residue protein sequence, read N- to C-terminus: Outer-membrane lipoprotein LolB (207 aa).

The signal sequence occupies residues 1-21 (MPQPDFRLIRLLPLAALVLTA). Cys-22 carries the N-palmitoyl cysteine lipid modification. Cys-22 is lipidated: S-diacylglycerol cysteine.

This sequence belongs to the LolB family. As to quaternary structure, monomer.

The protein resides in the cell outer membrane. Functionally, plays a critical role in the incorporation of lipoproteins in the outer membrane after they are released by the LolA protein. The sequence is that of Outer-membrane lipoprotein LolB from Shigella sonnei (strain Ss046).